A 258-amino-acid chain; its full sequence is Aquaglyceroporin (258 aa).

Residues 1-16 (MKVTFGNEYIKNFLGE) lie on the Cytoplasmic side of the membrane. Residues 17 to 37 (FIGTFVLMFLGEGTTANHFAV) form a helical membrane-spanning segment. The Extracellular segment spans residues 38–45 (PIKNDWLR). The helical transmembrane segment at 46–66 (LCIGWGLGVFFGILISAKLSG) threads the bilayer. Glycerol is bound by residues Ala-67 and Asn-70. The Cytoplasmic segment spans residues 67–87 (AHLNLAVTVGLSTIKKFNYKQ). Residues 88-108 (IPLYFAGQLLGALSATASVYG) traverse the membrane as a helical segment. Residues 109 to 133 (LYYGFVSDQTIPKFSWETGKHANVH) are Extracellular-facing. A helical membrane pass occupies residues 134-154 (IASAFMHEFILTGILLLIILS). Residues 155–171 (VTDENICGKFHVLKVSS) are Cytoplasmic-facing. A helical membrane pass occupies residues 172–192 (IVGLAIICIGISFGGNTGFAL). The glycerol site is built by Gly-189, Phe-190, Asn-193, and Arg-196. Over 193 to 217 (NPSRDLGARILSAIAYGFEAFTRDK) the chain is Extracellular. A helical membrane pass occupies residues 218 to 238 (CYFWIPLIAPIIGSIIFCQIY). The Cytoplasmic portion of the chain corresponds to 239–258 (DKIVAPLVVISEHDKGALEI).

This sequence belongs to the MIP/aquaporin (TC 1.A.8) family.

The protein resides in the cell membrane. It catalyses the reaction H2O(in) = H2O(out). It carries out the reaction glycerol(in) = glycerol(out). The catalysed reaction is urea(in) = urea(out). Mediates water and glycerol transport across the cell membrane. Permeable to urea. Required for efficient progression of parasites through the liver stages. This Plasmodium berghei (strain Anka) protein is Aquaglyceroporin.